The sequence spans 370 residues: Natural killer cell receptor 2B4 (370 aa).

The first 21 residues, 1-21 (MLGQVVTLILLLLLKVYQGKG), serve as a signal peptide directing secretion. 2 Ig-like domains span residues 22-127 (CQGS…FVFE) and 131-215 (PDKV…LNLT). Topologically, residues 22 to 229 (CQGSADHVVS…NAHQEFRFWP (208 aa)) are extracellular. Asn71, Asn77, Asn89, Asn164, Asn181, Asn192, Asn200, and Asn213 each carry an N-linked (GlcNAc...) asparagine glycan. A disulfide bond links Cys157 and Cys199. The helical transmembrane segment at 230–250 (FLVIIVILSALFLGTLACFCV) threads the bilayer. The Cytoplasmic portion of the chain corresponds to 251 to 370 (WRRKRKEKQS…KELENFDVYS (120 aa)). 4 short sequence motifs (ITSM) span residues 269–274 (TIYEDV), 295–300 (TIYSMI), 315–320 (TLYSLI), and 340–345 (TIYEVI). Tyr271 is modified (phosphotyrosine). Phosphotyrosine; by FYN is present on Tyr297. Position 317 is a phosphotyrosine (Tyr317). Residues 324–370 (RKSGSRKRNHSPSFNSTIYEVIGKSQPKAQNPARLSRKELENFDVYS) are disordered. The residue at position 342 (Tyr342) is a Phosphotyrosine; by FYN.

In terms of assembly, interacts with CD48. Interacts (via phosphorylated ITSM 1-4) with SH2D1A (via SH2 domain); SH2D1A probably mediates association with FYN. Interacts (via phosphorylated ITSM 3) with PTPN11/SHP-2, INPP5D/SHIP1, PTPN6/SHP-1 and CSK; binding of SH2D1A/SAP prevents association with PTPN11, PTPN6 and CSK; conflictingly a similar association has been described for phosphorylated ITSM 1 also including GRB2 and PLCG1. Interacts weakly (via phosphorylated ITSM 2) with PTPN11/SHP-2 and CSK. Interacts with SH2D1B. Interacts with PIK3R1; PI3K recruits SH2D1A. Interacts with MHC class I proteins; the interaction is proposed to prevent self-killing of NK cells. N-linked glycosylation is essential for the binding to its ligand CD48. Also O-glycosylated, in contrast, O-linked sialylation has a negative impact on ligand binding. Post-translationally, phosphorylated by FYN and CSK on tyrosine residues following activation. Coligation with inhibitory receptors such as KIR2DL1 inhibits phosphorylation upon contact of NK cells with sensitive target cells. As to expression, expressed in spleen, PBL, followed by lung, liver, testis and small intestine. Expressed in all natural killer (NK) cells, monocytes and basophils, TCR-gamma/delta+ T-cells, monocytes, basophils, and on a subset of CD8(+) T-cells.

It is found in the membrane. Its subcellular location is the cell membrane. It localises to the membrane raft. Heterophilic receptor of the signaling lymphocytic activation molecule (SLAM) family; its ligand is CD48. SLAM receptors triggered by homo- or heterotypic cell-cell interactions are modulating the activation and differentiation of a wide variety of immune cells and thus are involved in the regulation and interconnection of both innate and adaptive immune response. Activities are controlled by presence or absence of small cytoplasmic adapter proteins, SH2D1A/SAP and/or SH2D1B/EAT-2. Acts as activating natural killer (NK) cell receptor. Activating function implicates association with SH2D1A and FYN. Downstreaming signaling involves predominantly VAV1, and, to a lesser degree, INPP5D/SHIP1 and CBL. Signal attenuation in the absence of SH2D1A is proposed to be dependent on INPP5D and to a lesser extent PTPN6/SHP-1 and PTPN11/SHP-2. Stimulates NK cell cytotoxicity, production of IFN-gamma and granule exocytosis. Optimal expansion and activation of NK cells seems to be dependent on the engagement of CD244 with CD48 expressed on neighboring NK cells. Acts as costimulator in NK activation by enhancing signals by other NK receptors such as NCR3 and NCR1. At early stages of NK cell differentiation may function as an inhibitory receptor possibly ensuring the self-tolerance of developing NK cells. Involved in the regulation of CD8(+) T-cell proliferation; expression on activated T-cells and binding to CD48 provides costimulatory-like function for neighboring T-cells. Inhibits inflammatory responses in dendritic cells (DCs). The sequence is that of Natural killer cell receptor 2B4 (CD244) from Homo sapiens (Human).